A 284-amino-acid polypeptide reads, in one-letter code: 4-diphosphocytidyl-2-C-methyl-D-erythritol kinase (284 aa).

The active site involves K14. Residue 98 to 108 coordinates ATP; sequence PMGGGLGGGSS. D140 is a catalytic residue.

This sequence belongs to the GHMP kinase family. IspE subfamily.

The catalysed reaction is 4-CDP-2-C-methyl-D-erythritol + ATP = 4-CDP-2-C-methyl-D-erythritol 2-phosphate + ADP + H(+). Its pathway is isoprenoid biosynthesis; isopentenyl diphosphate biosynthesis via DXP pathway; isopentenyl diphosphate from 1-deoxy-D-xylulose 5-phosphate: step 3/6. In terms of biological role, catalyzes the phosphorylation of the position 2 hydroxy group of 4-diphosphocytidyl-2C-methyl-D-erythritol. The sequence is that of 4-diphosphocytidyl-2-C-methyl-D-erythritol kinase from Shewanella sp. (strain ANA-3).